A 156-amino-acid chain; its full sequence is Small ribosomal subunit protein uS7 (156 aa).

Belongs to the universal ribosomal protein uS7 family. As to quaternary structure, part of the 30S ribosomal subunit. Contacts proteins S9 and S11.

One of the primary rRNA binding proteins, it binds directly to 16S rRNA where it nucleates assembly of the head domain of the 30S subunit. Is located at the subunit interface close to the decoding center, probably blocks exit of the E-site tRNA. The sequence is that of Small ribosomal subunit protein uS7 from Alkaliphilus oremlandii (strain OhILAs) (Clostridium oremlandii (strain OhILAs)).